The primary structure comprises 215 residues: Cytochrome b6 (215 aa).

Residues 32–52 (IFYCLGGITFTSFLVQVATGF) traverse the membrane as a helical segment. Cysteine 35 is a binding site for heme c. 2 residues coordinate heme b: histidine 86 and histidine 100. 3 helical membrane passes run 90–110 (ASMM…TGGF), 116–136 (LTWV…VTGY), and 186–206 (LHTF…FLMI). 2 residues coordinate heme b: histidine 187 and histidine 202.

This sequence belongs to the cytochrome b family. PetB subfamily. The 4 large subunits of the cytochrome b6-f complex are cytochrome b6, subunit IV (17 kDa polypeptide, PetD), cytochrome f and the Rieske protein, while the 4 small subunits are PetG, PetL, PetM and PetN. The complex functions as a dimer. Heme b serves as cofactor. Requires heme c as cofactor.

The protein localises to the plastid. Its subcellular location is the chloroplast thylakoid membrane. Functionally, component of the cytochrome b6-f complex, which mediates electron transfer between photosystem II (PSII) and photosystem I (PSI), cyclic electron flow around PSI, and state transitions. In Oltmannsiellopsis viridis (Marine flagellate), this protein is Cytochrome b6.